A 352-amino-acid polypeptide reads, in one-letter code: 3-isopropylmalate dehydrogenase (352 aa).

76–89 (GYKWENLPHDKKPE) contributes to the NAD(+) binding site. Residues R96, R106, R134, and D220 each coordinate substrate. Residues D220, D244, and D248 each coordinate Mg(2+). 277–289 (GSAPDIAGQNKAN) serves as a coordination point for NAD(+).

This sequence belongs to the isocitrate and isopropylmalate dehydrogenases family. LeuB type 1 subfamily. In terms of assembly, homodimer. Requires Mg(2+) as cofactor. Mn(2+) serves as cofactor.

It localises to the cytoplasm. The enzyme catalyses (2R,3S)-3-isopropylmalate + NAD(+) = 4-methyl-2-oxopentanoate + CO2 + NADH. Its pathway is amino-acid biosynthesis; L-leucine biosynthesis; L-leucine from 3-methyl-2-oxobutanoate: step 3/4. In terms of biological role, catalyzes the oxidation of 3-carboxy-2-hydroxy-4-methylpentanoate (3-isopropylmalate) to 3-carboxy-4-methyl-2-oxopentanoate. The product decarboxylates to 4-methyl-2 oxopentanoate. In Chlorobaculum tepidum (strain ATCC 49652 / DSM 12025 / NBRC 103806 / TLS) (Chlorobium tepidum), this protein is 3-isopropylmalate dehydrogenase.